A 345-amino-acid chain; its full sequence is Adenine deaminase (345 aa).

Positions 20, 22, and 204 each coordinate Zn(2+). Catalysis depends on E207, which acts as the Proton donor. A Zn(2+)-binding site is contributed by D285. D286 is a binding site for substrate.

Belongs to the metallo-dependent hydrolases superfamily. Adenosine and AMP deaminases family. Adenine deaminase type 2 subfamily. It depends on Zn(2+) as a cofactor.

It carries out the reaction adenine + H2O + H(+) = hypoxanthine + NH4(+). Its function is as follows. Catalyzes the hydrolytic deamination of adenine to hypoxanthine. Plays an important role in the purine salvage pathway and in nitrogen catabolism. The protein is Adenine deaminase of Ralstonia pickettii (strain 12J).